A 498-amino-acid chain; its full sequence is Glycerol kinase (498 aa).

Residue threonine 12 participates in ADP binding. 3 residues coordinate ATP: threonine 12, threonine 13, and serine 14. Threonine 12 provides a ligand contact to sn-glycerol 3-phosphate. Arginine 16 provides a ligand contact to ADP. Residues arginine 82, glutamate 83, tyrosine 134, and aspartate 243 each contribute to the sn-glycerol 3-phosphate site. The glycerol site is built by arginine 82, glutamate 83, tyrosine 134, aspartate 243, and glutamine 244. ADP is bound by residues threonine 265 and glycine 308. The ATP site is built by threonine 265, glycine 308, glutamine 312, and glycine 409. Glycine 409 and asparagine 413 together coordinate ADP.

Belongs to the FGGY kinase family.

The catalysed reaction is glycerol + ATP = sn-glycerol 3-phosphate + ADP + H(+). It functions in the pathway polyol metabolism; glycerol degradation via glycerol kinase pathway; sn-glycerol 3-phosphate from glycerol: step 1/1. Its activity is regulated as follows. Inhibited by fructose 1,6-bisphosphate (FBP). Functionally, key enzyme in the regulation of glycerol uptake and metabolism. Catalyzes the phosphorylation of glycerol to yield sn-glycerol 3-phosphate. The chain is Glycerol kinase from Petrotoga mobilis (strain DSM 10674 / SJ95).